The following is a 406-amino-acid chain: Kelch domain-containing protein 2 (406 aa).

Kelch repeat units follow at residues 31 to 85, 92 to 136, 148 to 207, 221 to 259, 271 to 311, and 322 to 359; these read ERSG…NTEG, SGSC…ERID, LGVW…IWSQ, HACATVGNKGFVFGGRYRDARMNDLHYLNLDTWEWNELI, HSLT…IKFN, and HTACASDEGEVIVFGGCANNLLVHHRAAHSNEILIFSV.

Component of a CRL2(KLHDC2) E3 ubiquitin-protein ligase complex, also named ECS(KLHDC2) complex, composed of CUL2, Elongin BC (ELOB and ELOC), RBX1 and substrate-specific adapter KLHDC2. May form oligomers as a KLHDC2-ELOB-ELOC complex; this interaction is autoinhibitory for the E3 ligase complex as the substrate-binding site of KLHDC2 is blocked in the oligomer. Interacts with CREB3; interaction is direct and specific as it does not interact with CREB1, ATF4, ATF6, JUN, FOS, CEBPA or herpes simplex virus transactivator VP16. Autoubiquitinated by the CRL2(KLHDC2) E3 ligase complex.

It localises to the nucleus. It functions in the pathway protein modification; protein ubiquitination. In terms of biological role, substrate-recognition component of a Cul2-RING (CRL2) E3 ubiquitin-protein ligase complex of the DesCEND (destruction via C-end degrons) pathway, which recognizes a C-degron located at the extreme C terminus of target proteins, leading to their ubiquitination and degradation. The C-degron recognized by the DesCEND pathway is usually a motif of less than ten residues and can be present in full-length proteins, truncated proteins or proteolytically cleaved forms. The CRL2(KLHDC2) complex specifically recognizes proteins with a diglycine (Gly-Gly) at the C-terminus, leading to their ubiquitination and degradation. The CRL2(KLHDC2) complex mediates ubiquitination and degradation of truncated SELENOK and SELENOS selenoproteins produced by failed UGA/Sec decoding, which end with a diglycine. The CRL2(KLHDC2) complex also recognizes proteolytically cleaved proteins ending with Gly-Gly, such as the N-terminal fragment of USP1, leading to their degradation. May also act as an indirect repressor of CREB3-mediated transcription by interfering with CREB3-DNA-binding. In Bos taurus (Bovine), this protein is Kelch domain-containing protein 2.